The primary structure comprises 384 residues: Ribosomal RNA small subunit methyltransferase H (384 aa).

Residues 99 to 101, D118, Y145, D169, and Q176 each bind S-adenosyl-L-methionine; that span reads GGH.

The protein belongs to the methyltransferase superfamily. RsmH family.

It localises to the cytoplasm. It catalyses the reaction cytidine(1402) in 16S rRNA + S-adenosyl-L-methionine = N(4)-methylcytidine(1402) in 16S rRNA + S-adenosyl-L-homocysteine + H(+). Functionally, specifically methylates the N4 position of cytidine in position 1402 (C1402) of 16S rRNA. The polypeptide is Ribosomal RNA small subunit methyltransferase H (Mycobacteroides abscessus (strain ATCC 19977 / DSM 44196 / CCUG 20993 / CIP 104536 / JCM 13569 / NCTC 13031 / TMC 1543 / L948) (Mycobacterium abscessus)).